The sequence spans 328 residues: Phosphate acetyltransferase (328 aa).

Belongs to the phosphate acetyltransferase and butyryltransferase family.

The protein resides in the cytoplasm. The enzyme catalyses acetyl-CoA + phosphate = acetyl phosphate + CoA. It functions in the pathway metabolic intermediate biosynthesis; acetyl-CoA biosynthesis; acetyl-CoA from acetate: step 2/2. The polypeptide is Phosphate acetyltransferase (pta) (Staphylococcus aureus (strain MSSA476)).